A 555-amino-acid polypeptide reads, in one-letter code: HERV-H_2q24.1 provirus ancestral Env polyprotein (555 aa).

Residues 1–35 (MILAGRAPSNTSTLMKFYSLLLYSLLFSFPFLYHP) form the signal peptide. The Extracellular segment spans residues 36–515 (LPLPSYLHHT…WALSNWMSWV (480 aa)). Asparagine 47 is a glycosylation site (N-linked (GlcNAc...) asparagine). Residues 64–67 (CWLC) carry the CXXC motif. N-linked (GlcNAc...) asparagine glycans are attached at residues asparagine 222, asparagine 265, asparagine 283, asparagine 352, and asparagine 370. The segment at 388-408 (VIPLIPLMVGLGLSASTIALS) is fusion peptide. N-linked (GlcNAc...) asparagine glycosylation is present at asparagine 475. The chain crosses the membrane as a helical span at residues 516-536 (LPILSPLIPIFLLLLFGPCIF). Residues 537–555 (HLVSQFIQNRIQAITNHSI) are Cytoplasmic-facing.

It belongs to the gamma type-C retroviral envelope protein family. HERV class-I H env subfamily. In terms of assembly, the surface (SU) and transmembrane (TM) proteins form a heterodimer. SU and TM are attached by noncovalent interactions or by a labile interchain disulfide bond. In terms of processing, specific enzymatic cleavages in vivo yield the mature SU and TM proteins. Low expression in testis.

It is found in the virion. The protein localises to the cell membrane. Retroviral envelope proteins mediate receptor recognition and membrane fusion during early infection. Endogenous envelope proteins may have kept, lost or modified their original function during evolution. This endogenous envelope protein has lost its original fusogenic properties. Its function is as follows. SU mediates receptor recognition. In terms of biological role, TM anchors the envelope heterodimer to the viral membrane through one transmembrane domain. The other hydrophobic domain, called fusion peptide, mediates fusion of the viral membrane with the target cell membrane. The polypeptide is HERV-H_2q24.1 provirus ancestral Env polyprotein (Homo sapiens (Human)).